The following is a 282-amino-acid chain: Pantothenate synthetase (282 aa).

30–37 provides a ligand contact to ATP; it reads MGYLHEGH. The active-site Proton donor is the His37. Gln61 is a binding site for (R)-pantoate. Beta-alanine is bound at residue Gln61. 147–150 contacts ATP; it reads GMKD. Gln153 contacts (R)-pantoate. ATP-binding positions include Val176 and 184 to 187; that span reads KSSR.

Belongs to the pantothenate synthetase family. As to quaternary structure, homodimer.

It is found in the cytoplasm. It catalyses the reaction (R)-pantoate + beta-alanine + ATP = (R)-pantothenate + AMP + diphosphate + H(+). It participates in cofactor biosynthesis; (R)-pantothenate biosynthesis; (R)-pantothenate from (R)-pantoate and beta-alanine: step 1/1. Catalyzes the condensation of pantoate with beta-alanine in an ATP-dependent reaction via a pantoyl-adenylate intermediate. This chain is Pantothenate synthetase, found in Bacillus cereus (strain G9842).